The following is a 947-amino-acid chain: Protein translocase subunit SecA (947 aa).

ATP-binding positions include Gln87, 105-109 (GEGKT), and Asp494. The interval 860 to 947 (TAPKPLPTQE…NRAPKSKRKR (88 aa)) is disordered. The span at 870-885 (AAARTTGTAAPTALRA) shows a compositional bias: low complexity. Composition is skewed to basic and acidic residues over residues 903 to 914 (EDGKAKATRDSA) and 922 to 931 (ASRRERREAA).

This sequence belongs to the SecA family. As to quaternary structure, monomer and homodimer. Part of the essential Sec protein translocation apparatus which comprises SecA, SecYEG and auxiliary proteins SecDF. Other proteins may also be involved.

It is found in the cell membrane. The protein localises to the cytoplasm. It catalyses the reaction ATP + H2O + cellular proteinSide 1 = ADP + phosphate + cellular proteinSide 2.. In terms of biological role, part of the Sec protein translocase complex. Interacts with the SecYEG preprotein conducting channel. Has a central role in coupling the hydrolysis of ATP to the transfer of proteins into and across the cell membrane, serving as an ATP-driven molecular motor driving the stepwise translocation of polypeptide chains across the membrane. This chain is Protein translocase subunit SecA, found in Rhodococcus erythropolis (strain PR4 / NBRC 100887).